A 199-amino-acid chain; its full sequence is 7-methyl-GTP pyrophosphatase (199 aa).

Aspartate 76 serves as the catalytic Proton acceptor.

The protein belongs to the Maf family. YceF subfamily. The cofactor is a divalent metal cation.

Its subcellular location is the cytoplasm. The enzyme catalyses N(7)-methyl-GTP + H2O = N(7)-methyl-GMP + diphosphate + H(+). Its function is as follows. Nucleoside triphosphate pyrophosphatase that hydrolyzes 7-methyl-GTP (m(7)GTP). May have a dual role in cell division arrest and in preventing the incorporation of modified nucleotides into cellular nucleic acids. The chain is 7-methyl-GTP pyrophosphatase (maf-2) from Brucella suis biovar 1 (strain 1330).